The chain runs to 284 residues: Bifunctional protein FolD (284 aa).

NADP(+)-binding positions include G165–S167 and S190.

Belongs to the tetrahydrofolate dehydrogenase/cyclohydrolase family. In terms of assembly, homodimer.

The enzyme catalyses (6R)-5,10-methylene-5,6,7,8-tetrahydrofolate + NADP(+) = (6R)-5,10-methenyltetrahydrofolate + NADPH. The catalysed reaction is (6R)-5,10-methenyltetrahydrofolate + H2O = (6R)-10-formyltetrahydrofolate + H(+). It participates in one-carbon metabolism; tetrahydrofolate interconversion. In terms of biological role, catalyzes the oxidation of 5,10-methylenetetrahydrofolate to 5,10-methenyltetrahydrofolate and then the hydrolysis of 5,10-methenyltetrahydrofolate to 10-formyltetrahydrofolate. This Streptococcus pyogenes serotype M2 (strain MGAS10270) protein is Bifunctional protein FolD.